A 548-amino-acid chain; its full sequence is Flagellin (548 aa).

Belongs to the bacterial flagellin family.

The protein resides in the secreted. Its subcellular location is the bacterial flagellum. Flagellin is the subunit protein which polymerizes to form the filaments of bacterial flagella. This is Flagellin (fliC) from Escherichia coli O127:H6 (strain E2348/69 / EPEC).